Consider the following 101-residue polypeptide: Urease subunit beta (101 aa).

The protein belongs to the urease beta subunit family. Heterotrimer of UreA (gamma), UreB (beta) and UreC (alpha) subunits. Three heterotrimers associate to form the active enzyme.

Its subcellular location is the cytoplasm. The catalysed reaction is urea + 2 H2O + H(+) = hydrogencarbonate + 2 NH4(+). Its pathway is nitrogen metabolism; urea degradation; CO(2) and NH(3) from urea (urease route): step 1/1. The sequence is that of Urease subunit beta from Bradyrhizobium diazoefficiens (strain JCM 10833 / BCRC 13528 / IAM 13628 / NBRC 14792 / USDA 110).